Consider the following 361-residue polypeptide: Ubiquitin fusion degradation protein 1 (361 aa).

3 monoubiquitin-binding regions span residues 27 to 28 (CY), 30 to 32 (IAM), and 99 to 101 (WMM). Residues 310-361 (EDEESAAGSKSSEQNFQGQGISLRKSNKRKTKSDHDSSKSKAPKSPEVIEID) are disordered. A compositionally biased stretch (polar residues) spans 317–329 (GSKSSEQNFQGQG). Phosphoserine is present on serine 354.

Belongs to the UFD1 family. Component of the heterotrimeric CDC48-NPL4-UFD1 ATPase complex. The CDC48-NPL4-UFD1 ATPase complex interacts with the HRD1 ubiquitin ligase complex composed of the E3 ligase HRD1, its cofactors HRD3, USA1 and DER1, substrate recruiting factor YOS9 and CDC48-binding protein UBX2. Interaction between the complexes is mediated by interaction between CDC48-NPL4-UFD1 complex member CDC48 and HRD1 complex member UBX2. Forms a complex composed of CDC48, NPL4, UFD1, DOA1, SHP1 and deubiquitinase OTU1. Interacts with NPL4, CDC48 and UBX2.

Functions at a post-ubiquitation step in the ubiquitin fusion degradation (UFD) pathway. Has a role in the endoplasmic reticulum-associated degradation (ERAD) pathway. Required for the proteasome-dependent processing/activation of MGA2 and SPT23 transcription factors leading to the subsequent expression of OLE1. Has an additional role in the turnover of OLE1 where it targets ubiquitinated OLE1 and other proteins to the ERAD. This chain is Ubiquitin fusion degradation protein 1 (UFD1), found in Saccharomyces cerevisiae (strain ATCC 204508 / S288c) (Baker's yeast).